A 352-amino-acid chain; its full sequence is Ferrochelatase (352 aa).

The Fe cation site is built by histidine 222 and glutamate 303.

It belongs to the ferrochelatase family.

The protein localises to the cytoplasm. The enzyme catalyses heme b + 2 H(+) = protoporphyrin IX + Fe(2+). Its pathway is porphyrin-containing compound metabolism; protoheme biosynthesis; protoheme from protoporphyrin-IX: step 1/1. Functionally, catalyzes the ferrous insertion into protoporphyrin IX. The chain is Ferrochelatase from Brucella canis (strain ATCC 23365 / NCTC 10854 / RM-666).